The following is a 343-amino-acid chain: L-threonine 3-dehydrogenase (343 aa).

C40 contributes to the Zn(2+) binding site. Residues T42 and H45 each act as charge relay system in the active site. 6 residues coordinate Zn(2+): H65, E66, C95, C98, C101, and C109. Residues I177, D197, R202, 264–266 (LGI), and 288–289 (IY) contribute to the NAD(+) site.

Belongs to the zinc-containing alcohol dehydrogenase family. In terms of assembly, homotetramer. Requires Zn(2+) as cofactor.

The protein localises to the cytoplasm. It catalyses the reaction L-threonine + NAD(+) = (2S)-2-amino-3-oxobutanoate + NADH + H(+). It participates in amino-acid degradation; L-threonine degradation via oxydo-reductase pathway; glycine from L-threonine: step 1/2. In terms of biological role, catalyzes the NAD(+)-dependent oxidation of L-threonine to 2-amino-3-ketobutyrate. In Vibrio atlanticus (strain LGP32) (Vibrio splendidus (strain Mel32)), this protein is L-threonine 3-dehydrogenase.